We begin with the raw amino-acid sequence, 212 residues long: Thiamine-phosphate synthase (212 aa).

4-amino-2-methyl-5-(diphosphooxymethyl)pyrimidine contacts are provided by residues 40 to 44 (QFREK) and Asn75. Positions 76 and 95 each coordinate Mg(2+). Ser113 lines the 4-amino-2-methyl-5-(diphosphooxymethyl)pyrimidine pocket. 139-141 (TSS) contributes to the 2-[(2R,5Z)-2-carboxy-4-methylthiazol-5(2H)-ylidene]ethyl phosphate binding site. Lys142 lines the 4-amino-2-methyl-5-(diphosphooxymethyl)pyrimidine pocket. 2-[(2R,5Z)-2-carboxy-4-methylthiazol-5(2H)-ylidene]ethyl phosphate contacts are provided by residues Gly171 and 191 to 192 (IS).

This sequence belongs to the thiamine-phosphate synthase family. Requires Mg(2+) as cofactor.

It carries out the reaction 2-[(2R,5Z)-2-carboxy-4-methylthiazol-5(2H)-ylidene]ethyl phosphate + 4-amino-2-methyl-5-(diphosphooxymethyl)pyrimidine + 2 H(+) = thiamine phosphate + CO2 + diphosphate. The catalysed reaction is 2-(2-carboxy-4-methylthiazol-5-yl)ethyl phosphate + 4-amino-2-methyl-5-(diphosphooxymethyl)pyrimidine + 2 H(+) = thiamine phosphate + CO2 + diphosphate. It catalyses the reaction 4-methyl-5-(2-phosphooxyethyl)-thiazole + 4-amino-2-methyl-5-(diphosphooxymethyl)pyrimidine + H(+) = thiamine phosphate + diphosphate. The protein operates within cofactor biosynthesis; thiamine diphosphate biosynthesis; thiamine phosphate from 4-amino-2-methyl-5-diphosphomethylpyrimidine and 4-methyl-5-(2-phosphoethyl)-thiazole: step 1/1. In terms of biological role, condenses 4-methyl-5-(beta-hydroxyethyl)thiazole monophosphate (THZ-P) and 2-methyl-4-amino-5-hydroxymethyl pyrimidine pyrophosphate (HMP-PP) to form thiamine monophosphate (TMP). The sequence is that of Thiamine-phosphate synthase from Staphylococcus epidermidis (strain ATCC 35984 / DSM 28319 / BCRC 17069 / CCUG 31568 / BM 3577 / RP62A).